Reading from the N-terminus, the 114-residue chain is Beta-microseminoprotein J1 (114 aa).

Positions 1-20 (MNVLLGGLVIFATFVTLCNA) are cleaved as a signal peptide. Cystine bridges form between Cys-22/Cys-70, Cys-38/Cys-62, Cys-57/Cys-93, Cys-60/Cys-69, and Cys-84/Cys-107.

It belongs to the beta-microseminoprotein family.

It is found in the secreted. This chain is Beta-microseminoprotein J1 (MSPJ), found in Saguinus oedipus (Cotton-top tamarin).